Consider the following 48-residue polypeptide: Large ribosomal subunit protein bL33A (48 aa).

This sequence belongs to the bacterial ribosomal protein bL33 family.

This is Large ribosomal subunit protein bL33A from Streptococcus pyogenes serotype M28 (strain MGAS6180).